Consider the following 66-residue polypeptide: ATP synthase protein 8 (66 aa).

A helical membrane pass occupies residues 8–24 (PWPMVIMSMILTLFYIT). An N6-acetyllysine; alternate modification is found at Lys-54. Lys-54 bears the N6-succinyllysine; alternate mark. At Lys-57 the chain carries N6-acetyllysine.

This sequence belongs to the ATPase protein 8 family. F-type ATPases have 2 components, CF(1) - the catalytic core - and CF(0) - the membrane proton channel. Component of an ATP synthase complex composed of ATP5PB, ATP5MC1, ATP5F1E, ATP5PD, ATP5ME, ATP5PF, ATP5MF, MT-ATP6, MT-ATP8, ATP5F1A, ATP5F1B, ATP5F1D, ATP5F1C, ATP5PO, ATP5MG, ATP5MK and ATP5MJ. Interacts with PRICKLE3.

The protein localises to the mitochondrion membrane. Mitochondrial membrane ATP synthase (F(1)F(0) ATP synthase or Complex V) produces ATP from ADP in the presence of a proton gradient across the membrane which is generated by electron transport complexes of the respiratory chain. F-type ATPases consist of two structural domains, F(1) - containing the extramembraneous catalytic core and F(0) - containing the membrane proton channel, linked together by a central stalk and a peripheral stalk. During catalysis, ATP synthesis in the catalytic domain of F(1) is coupled via a rotary mechanism of the central stalk subunits to proton translocation. Part of the complex F(0) domain. Minor subunit located with subunit a in the membrane. This is ATP synthase protein 8 (MT-ATP8) from Alouatta guariba (Brown howler monkey).